Here is a 487-residue protein sequence, read N- to C-terminus: Cytochrome P450 monooxygenase pyvB (487 aa).

The chain crosses the membrane as a helical span at residues 17 to 37 (PAYSSVVIGALVVCLVCLVWP). Residue cysteine 426 coordinates heme.

Belongs to the cytochrome P450 family. Heme serves as cofactor.

The protein resides in the membrane. The protein operates within secondary metabolite biosynthesis. Cytochrome P450 monooxygenase; part of the gene cluster that mediates the biosynthesis of pyranoviolin A, a pyranonigrin analog with a C-3 methoxy group. Initially, the PKS portion of pyvA synthesizes C-10 carbon chain from 5 molecules of malonyl-CoA, which is then condensed with the thiolation (T) domain-bound glycine activated by the adenylation (A) domain. The subsequent chain release by Dieckmann condensation (DKC) could be catalyzed by the TE domain present at the C-terminus of pyvA and/or the alpha/beta hydrolase pyvD, installing the tetramic acid moiety. The FAD-dependent monooxygenase pyvC next epoxidizes one of the olefins of the polyketide part, and the epoxide ring-opening induces the dihydro-gamma-pyrone ring formation. The cytochrome P450 monooxygeanse pyvB would be responsible for the 2 consecutive reactions, in which the dihydro-gamma-pyrone is oxidized to gamma-pyrone and C-7 is hydroxylated to yield pyranonigrin F. Finally, the O-methyltransferase pyvH methylates the C-3 hydroxy group to complete the biosynthesis. This chain is Cytochrome P450 monooxygenase pyvB, found in Aspergillus violaceofuscus (strain CBS 115571).